The following is a 144-amino-acid chain: Large ribosomal subunit protein uL16 (144 aa).

It belongs to the universal ribosomal protein uL16 family. In terms of assembly, part of the 50S ribosomal subunit.

Its function is as follows. Binds 23S rRNA and is also seen to make contacts with the A and possibly P site tRNAs. In Bacillus subtilis (strain 168), this protein is Large ribosomal subunit protein uL16.